A 419-amino-acid polypeptide reads, in one-letter code: Divergent protein kinase domain 1C (419 aa).

The Cytoplasmic portion of the chain corresponds to 1–22; sequence MARAAGARGPAGWCRRRGRCGR. The May mediate ER retention signature appears at 16 to 17; that stretch reads RR. The helical transmembrane segment at 23-43 threads the bilayer; it reads GTLLAFAAWTAGWVLAAALLL. At 44–419 the chain is on the lumenal side; it reads RAHPGVLSER…TLRELQEAEK (376 aa).

This sequence belongs to the DIPK family. Post-translationally, among the many cysteines in the lumenal domain, most are probably involved in disulfide bonds.

It localises to the endoplasmic reticulum membrane. This chain is Divergent protein kinase domain 1C, found in Homo sapiens (Human).